The chain runs to 115 residues: Promotilin (115 aa).

The N-terminal stretch at 1–25 (MLSRKATAVLLAVHAAAMLASQTEA) is a signal peptide. The interval 43 to 72 (RYKGQKKSLSVQQRSEEVGPVDPTEPWEEK) is disordered.

Belongs to the motilin family.

The protein resides in the secreted. In terms of biological role, plays an important role in the regulation of interdigestive gastrointestinal motility and indirectly causes rhythmic contraction of duodenal and colonic smooth muscle. This is Promotilin (MLN) from Bos taurus (Bovine).